The sequence spans 623 residues: Negative regulator of PDR1-mediated fluconazole resistance JJJ1 (623 aa).

Residues 4–70 (CYYDLLEVRS…QERAWYDSHK (67 aa)) enclose the J domain. The C2H2-type zinc-finger motif lies at 363–387 (YDCFICKKSFKSEKQLENHIKTKLH). 3 disordered regions span residues 448–476 (QSSVTDSEDFTDDNNDTEDQNSLVDKLSN), 499–581 (GADN…NDAK), and 599–623 (SHIQTEGHVSPLSKVKKGKRSKKNK). The segment covering 453-466 (DSEDFTDDNNDTED) has biased composition (acidic residues). Polar residues predominate over residues 499 to 508 (GADNSETQNA). A compositionally biased stretch (basic and acidic residues) spans 525–538 (ELTRILRELEESKT). Basic residues-rich tracts occupy residues 553–564 (KKKTKAKKKKNK) and 612–623 (KVKKGKRSKKNK).

The protein localises to the nucleus. Acts as a negative regulator of fluconazole resistance, primarily through down-regulation of the ABC transporter gene CDR1 via inactivation of the PDR1 transcriptional pathway. The chain is Negative regulator of PDR1-mediated fluconazole resistance JJJ1 from Candida glabrata (strain ATCC 2001 / BCRC 20586 / JCM 3761 / NBRC 0622 / NRRL Y-65 / CBS 138) (Yeast).